A 574-amino-acid polypeptide reads, in one-letter code: Golgin subfamily A member 6-like protein 4 (574 aa).

The span at 1 to 11 (MWPQPRFPPHP) shows a compositional bias: pro residues. Disordered regions lie at residues 1–77 (MWPQ…YGEG) and 491–552 (KELK…AAGG). Residues 51-62 (NGSSPDTATSGG) are compositionally biased toward polar residues. A coiled-coil region spans residues 157–496 (SKVEQLQDET…EQQVKELKKS (340 aa)). Positions 491-504 (KELKKSGGAEEPRG) are enriched in basic and acidic residues. The span at 508 to 523 (AAAARPVAGAPVPQGA) shows a compositional bias: low complexity.

The protein belongs to the GOLGA6 family.

This chain is Golgin subfamily A member 6-like protein 4 (GOLGA6L4), found in Homo sapiens (Human).